Reading from the N-terminus, the 79-residue chain is Kunitz-type serine protease inhibitor microlepidin-5 (79 aa).

Residues 1-24 (MSSGGLLLLLGLLTLWEVLTPVSS) form the signal peptide. The 49-residue stretch at 31–79 (YELPADIGPCEDFTGAFHYSPREHECIEFIYGGCEGNANNFNTLEECET) folds into the BPTI/Kunitz inhibitor domain. Intrachain disulfides connect Cys40-Cys64 and Cys56-Cys77.

This sequence belongs to the venom Kunitz-type family. Expressed by the venom gland.

It localises to the secreted. In terms of biological role, serine protease inhibitor. The polypeptide is Kunitz-type serine protease inhibitor microlepidin-5 (Oxyuranus microlepidotus (Inland taipan)).